The chain runs to 415 residues: Queuine tRNA-ribosyltransferase accessory subunit 2 (415 aa).

4 residues coordinate Zn(2+): C351, C353, C356, and H382.

The protein belongs to the queuine tRNA-ribosyltransferase family. QTRT2 subfamily. Heterodimer of a catalytic subunit QTRT1 and an accessory subunit QTRT2. Zn(2+) serves as cofactor.

Its subcellular location is the cytoplasm. It is found in the mitochondrion outer membrane. Its function is as follows. Non-catalytic subunit of the queuine tRNA-ribosyltransferase (TGT) that catalyzes the base-exchange of a guanine (G) residue with queuine (Q) at position 34 (anticodon wobble position) in tRNAs with GU(N) anticodons (tRNA-Asp, -Asn, -His and -Tyr), resulting in the hypermodified nucleoside queuosine (7-(((4,5-cis-dihydroxy-2-cyclopenten-1-yl)amino)methyl)-7-deazaguanosine). This Homo sapiens (Human) protein is Queuine tRNA-ribosyltransferase accessory subunit 2.